The sequence spans 423 residues: Serine--tRNA ligase (423 aa).

Over residues 1 to 12 (MIDLKALRENPD) the composition is skewed to basic and acidic residues. Residues 1–26 (MIDLKALRENPDVGRASQRSRGEDPE) are disordered. An L-serine-binding site is contributed by 230 to 232 (TSE). ATP is bound by residues 261 to 263 (RRE) and V277. An L-serine-binding site is contributed by E284. An ATP-binding site is contributed by 348–351 (ELTS). T383 is a binding site for L-serine.

This sequence belongs to the class-II aminoacyl-tRNA synthetase family. Type-1 seryl-tRNA synthetase subfamily. Homodimer. The tRNA molecule binds across the dimer.

It is found in the cytoplasm. It carries out the reaction tRNA(Ser) + L-serine + ATP = L-seryl-tRNA(Ser) + AMP + diphosphate + H(+). The enzyme catalyses tRNA(Sec) + L-serine + ATP = L-seryl-tRNA(Sec) + AMP + diphosphate + H(+). Its pathway is aminoacyl-tRNA biosynthesis; selenocysteinyl-tRNA(Sec) biosynthesis; L-seryl-tRNA(Sec) from L-serine and tRNA(Sec): step 1/1. In terms of biological role, catalyzes the attachment of serine to tRNA(Ser). Is also able to aminoacylate tRNA(Sec) with serine, to form the misacylated tRNA L-seryl-tRNA(Sec), which will be further converted into selenocysteinyl-tRNA(Sec). This chain is Serine--tRNA ligase, found in Beutenbergia cavernae (strain ATCC BAA-8 / DSM 12333 / CCUG 43141 / JCM 11478 / NBRC 16432 / NCIMB 13614 / HKI 0122).